The chain runs to 296 residues: Arginase (296 aa).

The Mn(2+) site is built by H98, D124, H126, and D128. Residues N130, S137, and D178 each contribute to the L-arginine site. D225 and D227 together coordinate Mn(2+). 2 residues coordinate L-arginine: D227 and T239.

It belongs to the arginase family. As to quaternary structure, monomer. Homodimer; dimerization is dispensable for catalytic activity. Requires Mn(2+) as cofactor.

It catalyses the reaction L-arginine + H2O = urea + L-ornithine. It participates in nitrogen metabolism; urea cycle; L-ornithine and urea from L-arginine: step 1/1. Its activity is regulated as follows. Substitution of the loosely bound surface exposed Mn(2+) with Mg(2+), Zn(2+), Ni(2+) or Co(2+) results in similar catalytic activity, substitution with Cd(2+) and Cu(2+) reduces catalytic activity and substitution with Hg(2+) and Ca(2+) inhibits the enzyme. Inhibited by L-norvaline. In terms of biological role, catalyzes the hydrolysis of L-arginine into urea and L-ornithine, which is a precursor for polyamine biosynthesis. By depleting host L-arginine, a substrate for nitric oxide synthase (NOS), prevents the production of nitric oxide (NO) by host activated macrophages, and thus allows the parasite to evade host immune response. The polypeptide is Arginase (Entamoeba histolytica (strain ATCC 30459 / HM-1:IMSS / ABRM)).